Reading from the N-terminus, the 668-residue chain is Type II methyltransferase M.MwoI (668 aa).

This sequence belongs to the N(4)/N(6)-methyltransferase family. N(4) subfamily.

It catalyses the reaction a 2'-deoxycytidine in DNA + S-adenosyl-L-methionine = an N(4)-methyl-2'-deoxycytidine in DNA + S-adenosyl-L-homocysteine + H(+). In terms of biological role, a beta subtype methylase, recognizes the double-stranded DNA sequence 5'-GCNNNNNNNGC-3', methylates C-2 on both strands, and protects the DNA from cleavage by the MwoI endonuclease. In Methanothermobacter wolfeii (Methanobacterium wolfei), this protein is Type II methyltransferase M.MwoI.